The sequence spans 453 residues: Validoxylamine A glucosyltransferase (453 aa).

Belongs to the glycosyltransferase 2 family. It depends on Mn(2+) as a cofactor.

The catalysed reaction is validoxylamine A + UDP-alpha-D-glucose = validamycin A + UDP + H(+). In terms of biological role, involved in the biosynthesis of the antifungal agent validamycin A. Catalyzes the final attachment of glucose from UDP-alpha-D-glucose to validoxylamine A to yield validamycin A. This chain is Validoxylamine A glucosyltransferase, found in Streptomyces hygroscopicus subsp. limoneus.